We begin with the raw amino-acid sequence, 196 residues long: ATP-dependent Clp protease proteolytic subunit 1 (196 aa).

Catalysis depends on Ser-96, which acts as the Nucleophile. His-121 is a catalytic residue.

It belongs to the peptidase S14 family. In terms of assembly, fourteen ClpP subunits assemble into 2 heptameric rings which stack back to back to give a disk-like structure with a central cavity, resembling the structure of eukaryotic proteasomes.

It localises to the cytoplasm. It carries out the reaction Hydrolysis of proteins to small peptides in the presence of ATP and magnesium. alpha-casein is the usual test substrate. In the absence of ATP, only oligopeptides shorter than five residues are hydrolyzed (such as succinyl-Leu-Tyr-|-NHMec, and Leu-Tyr-Leu-|-Tyr-Trp, in which cleavage of the -Tyr-|-Leu- and -Tyr-|-Trp bonds also occurs).. Cleaves peptides in various proteins in a process that requires ATP hydrolysis. Has a chymotrypsin-like activity. Plays a major role in the degradation of misfolded proteins. This chain is ATP-dependent Clp protease proteolytic subunit 1, found in Prochlorococcus marinus subsp. pastoris (strain CCMP1986 / NIES-2087 / MED4).